A 64-amino-acid polypeptide reads, in one-letter code: Large ribosomal subunit protein bL33 (64 aa).

Residues 16–25 (EARTSSEPRR) are compositionally biased toward basic and acidic residues. The disordered stretch occupies residues 16–41 (EARTSSEPRRSNGVSRYTTEKNKRNT).

The protein belongs to the bacterial ribosomal protein bL33 family.

This Prochlorococcus marinus subsp. pastoris (strain CCMP1986 / NIES-2087 / MED4) protein is Large ribosomal subunit protein bL33.